The sequence spans 326 residues: tRNA uridine(34) hydroxylase (326 aa).

The Rhodanese domain maps to 123 to 217; sequence SDPDVLLVDT…YLEEVPEENS (95 aa). C177 acts as the Cysteine persulfide intermediate in catalysis. Over residues 276–320 the composition is skewed to basic and acidic residues; that stretch reads EEQKSRFREREKQVQLANERGETHVGGDAAKLIEQRKQEKKEKKQ. Residues 276 to 326 form a disordered region; that stretch reads EEQKSRFREREKQVQLANERGETHVGGDAAKLIEQRKQEKKEKKQQQRSSK.

This sequence belongs to the TrhO family.

It catalyses the reaction uridine(34) in tRNA + AH2 + O2 = 5-hydroxyuridine(34) in tRNA + A + H2O. Its function is as follows. Catalyzes oxygen-dependent 5-hydroxyuridine (ho5U) modification at position 34 in tRNAs. The protein is tRNA uridine(34) hydroxylase of Aliivibrio salmonicida (strain LFI1238) (Vibrio salmonicida (strain LFI1238)).